The chain runs to 317 residues: Acetyl-coenzyme A carboxylase carboxyl transferase subunit alpha (317 aa).

The CoA carboxyltransferase C-terminal domain occupies 37 to 292 (QISQKLEDTK…EEYILKAFNE (256 aa)).

It belongs to the AccA family. In terms of assembly, acetyl-CoA carboxylase is a heterohexamer composed of biotin carboxyl carrier protein (AccB), biotin carboxylase (AccC) and two subunits each of ACCase subunit alpha (AccA) and ACCase subunit beta (AccD).

The protein localises to the cytoplasm. It carries out the reaction N(6)-carboxybiotinyl-L-lysyl-[protein] + acetyl-CoA = N(6)-biotinyl-L-lysyl-[protein] + malonyl-CoA. Its pathway is lipid metabolism; malonyl-CoA biosynthesis; malonyl-CoA from acetyl-CoA: step 1/1. In terms of biological role, component of the acetyl coenzyme A carboxylase (ACC) complex. First, biotin carboxylase catalyzes the carboxylation of biotin on its carrier protein (BCCP) and then the CO(2) group is transferred by the carboxyltransferase to acetyl-CoA to form malonyl-CoA. The sequence is that of Acetyl-coenzyme A carboxylase carboxyl transferase subunit alpha from Flavobacterium psychrophilum (strain ATCC 49511 / DSM 21280 / CIP 103535 / JIP02/86).